A 255-amino-acid polypeptide reads, in one-letter code: Formate hydrogenlyase subunit 7 (255 aa).

[4Fe-4S] cluster-binding residues include cysteine 45, cysteine 51, cysteine 115, and cysteine 145.

The protein belongs to the complex I 20 kDa subunit family. In terms of assembly, FHL comprises of a formate dehydrogenase, unidentified electron carriers and a hydrogenase (isoenzyme 3). In this non-energy conserving pathway molecular hydrogen and carbodioxide from formate are released. The cofactor is [4Fe-4S] cluster.

This chain is Formate hydrogenlyase subunit 7 (hycG), found in Escherichia coli (strain K12).